Here is a 1114-residue protein sequence, read N- to C-terminus: Transcriptional repressor NF-X1 (1114 aa).

The segment at 9 to 26 (GTFKFNTDAAEFIPQERK) is interaction with PABPC1 and PABC4. Disordered regions lie at residues 20–220 (FIPQ…CRKP), 232–287 (QRRY…PTKS), and 299–325 (KSSR…FPRG). Residues Ser50, Ser81, Ser92, Ser126, Ser130, and Ser147 each carry the phosphoserine modification. Polar residues-rich tracts occupy residues 72–103 (SYAS…NQPW) and 121–142 (LSEQ…SGTN). 4 stretches are compositionally biased toward basic and acidic residues: residues 143 to 156 (PREH…KEVV), 185 to 202 (LRSE…DENT), 232 to 248 (QRRY…EGAR), and 304 to 315 (VNQEKTAVRRQD). A Phosphoserine modification is found at Ser320. The segment at 352–403 (CMVCCELVQVTAPVWSCQSCFHVFHLNCIKKWARSPASHADGQSGWRCPACQ) adopts an RING-type; atypical zinc-finger fold. NF-X1-type zinc fingers lie at residues 447 to 465 (CPHS…PCPA), 500 to 519 (CGQH…PCRI), 561 to 580 (CGSH…PCPR), 626 to 649 (CGSS…PCSR), 688 to 707 (CGRH…KCPL), 715 to 734 (CGLH…TCWQ), 826 to 848 (CGMH…ACKQ), and 857 to 878 (CGHP…ACKA). Positions 988-1056 (LKFVSDVEKE…KRNVVVTAVR (69 aa)) constitute an R3H domain. The disordered stretch occupies residues 1071-1095 (ERETQTRPPPPIPHHRHQADKAPGS).

Belongs to the NFX1 family. As to quaternary structure, interacts with PABPC1 and PABPC4. In terms of tissue distribution, ubiquitously expressed, with highest levels in thymus.

It localises to the nucleus. Binds to the X-box motif of MHC class II genes and represses their expression. May play an important role in regulating the duration of an inflammatory response by limiting the period in which MHC class II molecules are induced by interferon-gamma. Together with PABPC1 or PABPC4, acts as a coactivator for TERT expression. Mediates E2-dependent ubiquitination. The protein is Transcriptional repressor NF-X1 (Nfx1) of Mus musculus (Mouse).